The following is a 588-amino-acid chain: Probable basic-leucine zipper transcription factor M (588 aa).

Residues 127 to 157 (QVEQQQEQEQEQEQQQKQQQQQYIEKQIQEI) adopt a coiled-coil conformation. Residues 221-240 (QQNHIDNQSLNNSNTKTSKN) show a composition bias toward low complexity. Positions 221-250 (QQNHIDNQSLNNSNTKTSKNQQKDNNLPKK) are disordered. Residues 263 to 326 (NNNNIEKKRD…GSNLMRPEPE (64 aa)) form the bZIP domain. The basic motif stretch occupies residues 269-289 (KKRDQTESSKNFREKKKEYVK). Positions 291–312 (IESKILALTLENDKLKKENDSL) are leucine-zipper.

It belongs to the bZIP family.

The protein resides in the nucleus. Probable transcriptional regulator. This chain is Probable basic-leucine zipper transcription factor M (bzpM), found in Dictyostelium discoideum (Social amoeba).